A 625-amino-acid chain; its full sequence is tRNA uridine 5-carboxymethylaminomethyl modification enzyme MnmG (625 aa).

11 to 16 serves as a coordination point for FAD; sequence GAGHAG. Residue 271–285 participates in NAD(+) binding; that stretch reads GPRYCPSIETKIVTF.

This sequence belongs to the MnmG family. As to quaternary structure, homodimer. Heterotetramer of two MnmE and two MnmG subunits. It depends on FAD as a cofactor.

Its subcellular location is the cytoplasm. In terms of biological role, NAD-binding protein involved in the addition of a carboxymethylaminomethyl (cmnm) group at the wobble position (U34) of certain tRNAs, forming tRNA-cmnm(5)s(2)U34. This is tRNA uridine 5-carboxymethylaminomethyl modification enzyme MnmG from Porphyromonas gingivalis (strain ATCC BAA-308 / W83).